The primary structure comprises 92 residues: Beta-2-microglobulin (92 aa).

The region spanning 2–91 (PQIQVYTRHP…VSMKEPKTVN (90 aa)) is the Ig-like C1-type domain. A disulfide bond links C22 and C77.

It belongs to the beta-2-microglobulin family. In terms of assembly, heterodimer of an alpha chain and a beta chain. Beta-2-microglobulin is the beta-chain of major histocompatibility complex class I molecules.

Its subcellular location is the secreted. Functionally, component of the class I major histocompatibility complex (MHC). Involved in the presentation of peptide antigens to the immune system. The polypeptide is Beta-2-microglobulin (B2m) (Mus caroli (Ryukyu mouse)).